We begin with the raw amino-acid sequence, 322 residues long: D-specific alpha-keto acid dehydrogenase (322 aa).

NAD(+) contacts are provided by residues 156 to 157 (QI), 229 to 231 (TGR), and D255. The active site involves R231. E260 is an active-site residue. H292 serves as the catalytic Proton donor. An NAD(+)-binding site is contributed by 292-295 (HTAY).

It belongs to the D-isomer specific 2-hydroxyacid dehydrogenase family.

The catalysed reaction is a (2R)-2-hydroxycarboxylate + NADP(+) = a 2-oxocarboxylate + NADPH + H(+). The enzyme catalyses a (2R)-2-hydroxycarboxylate + NAD(+) = a 2-oxocarboxylate + NADH + H(+). It catalyses the reaction (R)-lactate + NADP(+) = pyruvate + NADPH + H(+). It carries out the reaction (R)-lactate + NAD(+) = pyruvate + NADH + H(+). The catalysed reaction is (2R)-hydroxybutanoate + NADP(+) = 2-oxobutanoate + NADPH + H(+). Required for high-level resistance to glycopeptide antibiotics. Catalyzes the reduction of 2-keto acids to 2-D-hydroxy acids, exhibiting highest catalytic efficiency with pyruvate and 2-oxobutanoate/alpha-ketobutyrate as substrates, producing D-lactate and (2R)-hydroxybutanoate, respectively. Together with D-alanine--D-lactate ligase VanA, gives rise to peptidoglycan precursors that terminate in the depsipeptide D-alanine-D-lactate rather than the dipeptide D-alanine-D-alanine thus preventing vancomycin binding. Shows a slight preference for NADPH over NADH as the electron donor. In Enterococcus faecium (Streptococcus faecium), this protein is D-specific alpha-keto acid dehydrogenase.